The chain runs to 760 residues: uncharacterized protein (760 aa).

The segment covering 578-587 has biased composition (basic residues); that stretch reads RNRKQSKLRI. The tract at residues 578 to 604 is disordered; the sequence is RNRKQSKLRISKQQEIQPQKEESVKKE. A compositionally biased stretch (basic and acidic residues) spans 595 to 604; it reads PQKEESVKKE.

It localises to the mitochondrion. This is an uncharacterized protein from Dictyostelium citrinum (Slime mold).